The sequence spans 421 residues: Threonine--tRNA ligase editing subunit (421 aa).

This sequence belongs to the class-II aminoacyl-tRNA synthetase family. Archaea-specific ThrRS editing domain subfamily. Probably interacts with its catalytic subunit.

Its subcellular location is the cytoplasm. In terms of biological role, freestanding tRNA editing subunit of threonine--tRNA ligase, the catalytic subunit is probably AC Q9YDW0. Deacylates (edits) mischarged L-seryl-tRNA(Thr) in trans; has no activity on correctly charged L-threonyl-tRNA(Thr). Probably does not aminoacylate tRNA(Thr). Deacylates correctly charged glycyl-tRNA(Gly), but not glycyl-tRNA(Gly)(2'-dA76) (the terminal 2'-OH of tRNA adenine 76 has been dehydroxylated) nor the 2'-fluoro tRNA derivative, strongly suggesting the editing function is catalyzed by the 2'-OH of A76 of tRNA(Thr). This is Threonine--tRNA ligase editing subunit (thrS2) from Aeropyrum pernix (strain ATCC 700893 / DSM 11879 / JCM 9820 / NBRC 100138 / K1).